A 148-amino-acid chain; its full sequence is U2 snRNP component IST3 (148 aa).

Residues 31 to 109 enclose the RRM domain; sequence AYIYIGNLNR…RALKIDHTFY (79 aa).

It belongs to the IST3 family. Component of the 45S U1.U2.U4/U6.U5 penta-snRNP particle, a subcomplex of the spliceosome. Belongs to the CWC complex (or CEF1-associated complex), a spliceosome sub-complex reminiscent of a late-stage spliceosome composed of the U2, U5 and U6 snRNAs and at least BUD13, BUD31, BRR2, CDC40, CEF1, CLF1, CUS1, CWC2, CWC15, CWC21, CWC22, CWC23, CWC24, CWC25, CWC27, ECM2, HSH155, IST3, ISY1, LEA1, MSL1, NTC20, PRP8, PRP9, PRP11, PRP19, PRP21, PRP22, PRP45, PRP46, SLU7, SMB1, SMD1, SMD2, SMD3, SMX2, SMX3, SNT309, SNU114, SPP2, SYF1, SYF2, RSE1 and YJU2. Belongs to the pre-mRNA retention and splicing (RES) complex composed of at least BUD13, IST3 and PML1. Subunit of the U2 snRNP. Interacts with RDS3.

The protein resides in the cytoplasm. It localises to the nucleus. Functionally, required for pre-mRNA splicing and spliceosome assembly. As part of the pre-mRNA retention and splicing (RES) complex, required for nuclear pre-mRNA retention and efficient splicing. Required for MER1-activated splicing. This Saccharomyces cerevisiae (strain ATCC 204508 / S288c) (Baker's yeast) protein is U2 snRNP component IST3 (IST3).